Consider the following 224-residue polypeptide: SPI-2 type 3 secretion system stator protein (224 aa).

Belongs to the SctL stator family. In terms of assembly, the core secretion machinery of the T3SS is composed of approximately 20 different proteins, including cytoplasmic components, a base, an export apparatus and a needle. This subunit is part of the cytosolic complex. Interacts directly with SsaN/SctN2 (T3SS-2 ATPase).

The protein localises to the cytoplasm. Functionally, component of the type III secretion system (T3SS), also called injectisome, which is used to inject bacterial effector proteins into eukaryotic host cells. Acts as a regulator of the SsaN/SctN2 ATPase activity. In Salmonella typhimurium (strain LT2 / SGSC1412 / ATCC 700720), this protein is SPI-2 type 3 secretion system stator protein.